Consider the following 401-residue polypeptide: Steroid C26-monooxygenase (401 aa).

Cysteine 343 provides a ligand contact to heme.

It belongs to the cytochrome P450 family. The cofactor is heme.

The enzyme catalyses cholest-4-en-3-one + 6 reduced [2Fe-2S]-[ferredoxin] + 3 O2 + 5 H(+) = (25R)-3-oxocholest-4-en-26-oate + 6 oxidized [2Fe-2S]-[ferredoxin] + 4 H2O. It functions in the pathway steroid metabolism; cholesterol degradation. Involved in the utilization of cholesterol as the sole carbon and energy source by degrading the side chain. Primarily catalyzes the sequential oxidation of the terminal methyl of cholest-4-en-3-one into (25R)-26-hydroxycholest-4-en-3-one (alcohol), (25R)-26-oxocholest-4-en-3-one (aldehyde), to finally yield the carboxylic acid (25R)-3-oxocholest-4-en-26-oate. Also able to sequentially oxidize cholesterol itself, not only cholest-4-en-3-one. This Mycolicibacterium smegmatis (strain ATCC 700084 / mc(2)155) (Mycobacterium smegmatis) protein is Steroid C26-monooxygenase.